The chain runs to 144 residues: Large ribosomal subunit protein uL22 (144 aa).

A disordered region spans residues 1-38; the sequence is MAETQTTKKGAKRVRQPVPARRSKPNRPAKAAPGPHAS. The segment covering 9–27 has biased composition (basic residues); it reads KGAKRVRQPVPARRSKPNR.

The protein belongs to the universal ribosomal protein uL22 family. As to quaternary structure, part of the 50S ribosomal subunit.

Functionally, this protein binds specifically to 23S rRNA; its binding is stimulated by other ribosomal proteins, e.g. L4, L17, and L20. It is important during the early stages of 50S assembly. It makes multiple contacts with different domains of the 23S rRNA in the assembled 50S subunit and ribosome. Its function is as follows. The globular domain of the protein is located near the polypeptide exit tunnel on the outside of the subunit, while an extended beta-hairpin is found that lines the wall of the exit tunnel in the center of the 70S ribosome. This Anaeromyxobacter sp. (strain Fw109-5) protein is Large ribosomal subunit protein uL22.